Consider the following 182-residue polypeptide: Lipid A acyltransferase PagP (182 aa).

The N-terminal stretch at methionine 1–alanine 21 is a signal peptide. A lipid anchor (N-palmitoyl cysteine) is attached at cysteine 22. The S-diacylglycerol cysteine moiety is linked to residue cysteine 22. Residues histidine 55, aspartate 98, and serine 99 contribute to the active site.

This sequence belongs to the lipid A palmitoyltransferase family. Homodimer.

It is found in the cell outer membrane. It catalyses the reaction a lipid A + a 1,2-diacyl-sn-glycero-3-phosphocholine = a hepta-acyl lipid A + a 2-acyl-sn-glycero-3-phosphocholine. The enzyme catalyses a lipid IVA + a 1,2-diacyl-sn-glycero-3-phosphocholine = a lipid IVB + a 2-acyl-sn-glycero-3-phosphocholine. It carries out the reaction a lipid IIA + a 1,2-diacyl-sn-glycero-3-phosphocholine = a lipid IIB + a 2-acyl-sn-glycero-3-phosphocholine. Functionally, transfers a fatty acid residue from the sn-1 position of a phospholipid to the N-linked hydroxyfatty acid chain on the proximal unit of lipid A or its precursors. This Bordetella parapertussis (strain 12822 / ATCC BAA-587 / NCTC 13253) protein is Lipid A acyltransferase PagP.